We begin with the raw amino-acid sequence, 445 residues long: Phosphoglucosamine mutase (445 aa).

Serine 102 acts as the Phosphoserine intermediate in catalysis. Mg(2+) contacts are provided by serine 102, aspartate 241, aspartate 243, and aspartate 245. Serine 102 carries the post-translational modification Phosphoserine.

This sequence belongs to the phosphohexose mutase family. Mg(2+) serves as cofactor. Post-translationally, activated by phosphorylation.

The catalysed reaction is alpha-D-glucosamine 1-phosphate = D-glucosamine 6-phosphate. In terms of biological role, catalyzes the conversion of glucosamine-6-phosphate to glucosamine-1-phosphate. The polypeptide is Phosphoglucosamine mutase (Aliivibrio fischeri (strain MJ11) (Vibrio fischeri)).